The primary structure comprises 856 residues: Envelope glycoprotein gp160 (856 aa).

A signal peptide spans Met1–Glu31. Residues Asn32–Ile684 lie on the Extracellular side of the membrane. Residues Cys53 and Cys73 are joined by a disulfide bond. 7 N-linked (GlcNAc...) asparagine; by host glycosylation sites follow: Asn87, Asn132, Asn138, Asn152, Asn156, Asn183, and Asn198. Cystine bridges form between Cys118/Cys206, Cys125/Cys197, Cys130/Cys153, Cys219/Cys248, and Cys229/Cys240. The segment at Cys130–Asn152 is V1. The interval Cys153–Cys197 is V2. Residues Asn242, Asn263, Asn277, Asn294, Asn302, Asn332, Asn339, Asn355, and Asn364 are each glycosylated (N-linked (GlcNAc...) asparagine; by host). The segment at Cys297 to His330 is V3. Cys297 and Cys331 are oxidised to a cystine. The segment at Ser365–His375 is CD4-binding loop. 2 disulfide bridges follow: Cys379-Cys445 and Cys386-Cys418. The tract at residues Cys386–Cys418 is V4. N-linked (GlcNAc...) asparagine; by host glycans are attached at residues Asn387, Asn393, Asn398, Asn402, Asn411, Asn448, Asn461, Asn462, and Asn465. V5 regions lie at residues Asn461 to Gly471 and Thr463 to Gly471. A fusion peptide region spans residues Ala512–Ala532. The interval Lys574–Leu592 is immunosuppression. A disulfide bridge links Cys598 with Cys604. N-linked (GlcNAc...) asparagine; by host glycans are attached at residues Asn611, Asn616, and Asn637. Residues Lys633–Ala667 adopt a coiled-coil conformation. An MPER; binding to GalCer region spans residues Ala662–Lys683. Residues Phe685–Ile705 form a helical membrane-spanning segment. The Cytoplasmic portion of the chain corresponds to Asn706–Leu856. The short motif at Tyr712–Leu715 is the YXXL motif; contains endocytosis signal element. The segment at Leu720–Arg742 is disordered. A compositionally biased stretch (basic and acidic residues) spans His723–Arg742. Residue Cys764 is the site of S-palmitoyl cysteine; by host attachment. The short motif at Leu855–Leu856 is the Di-leucine internalization motif element.

This sequence belongs to the HIV-1 env protein family. In terms of assembly, the mature envelope protein (Env) consists of a homotrimer of non-covalently associated gp120-gp41 heterodimers. The resulting complex protrudes from the virus surface as a spike. There seems to be as few as 10 spikes on the average virion. Interacts with host CD4, CCR5 and CXCR4. Gp120 also interacts with the C-type lectins CD209/DC-SIGN and CLEC4M/DC-SIGNR (collectively referred to as DC-SIGN(R)). Gp120 and gp41 interact with GalCer. Gp120 interacts with host ITGA4/ITGB7 complex; on CD4+ T-cells, this interaction results in rapid activation of integrin ITGAL/LFA-1, which facilitates efficient cell-to-cell spreading of HIV-1. Gp120 interacts with cell-associated heparan sulfate; this interaction increases virus infectivity on permissive cells and may be involved in infection of CD4- cells. As to quaternary structure, the mature envelope protein (Env) consists of a homotrimer of non-covalently associated gp120-gp41 heterodimers. The resulting complex protrudes from the virus surface as a spike. There seems to be as few as 10 spikes on the average virion. In terms of processing, highly glycosylated by host. The high number of glycan on the protein is reffered to as 'glycan shield' because it contributes to hide protein sequence from adaptive immune system. Palmitoylation of the transmembrane protein and of Env polyprotein (prior to its proteolytic cleavage) is essential for their association with host cell membrane lipid rafts. Palmitoylation is therefore required for envelope trafficking to classical lipid rafts, but not for viral replication. Post-translationally, specific enzymatic cleavages in vivo yield mature proteins. Envelope glycoproteins are synthesized as an inactive precursor that is heavily N-glycosylated and processed likely by host cell furin in the Golgi to yield the mature SU and TM proteins. The cleavage site between SU and TM requires the minimal sequence [KR]-X-[KR]-R. About 2 of the 9 disulfide bonds of gp41 are reduced by P4HB/PDI, following binding to CD4 receptor.

It is found in the virion membrane. The protein resides in the host cell membrane. It localises to the host endosome membrane. Oligomerizes in the host endoplasmic reticulum into predominantly trimers. In a second time, gp160 transits in the host Golgi, where glycosylation is completed. The precursor is then proteolytically cleaved in the trans-Golgi and thereby activated by cellular furin or furin-like proteases to produce gp120 and gp41. In terms of biological role, attaches the virus to the host lymphoid cell by binding to the primary receptor CD4. This interaction induces a structural rearrangement creating a high affinity binding site for a chemokine coreceptor like CXCR4 and/or CCR5. Acts as a ligand for CD209/DC-SIGN and CLEC4M/DC-SIGNR, which are respectively found on dendritic cells (DCs), and on endothelial cells of liver sinusoids and lymph node sinuses. These interactions allow capture of viral particles at mucosal surfaces by these cells and subsequent transmission to permissive cells. HIV subverts the migration properties of dendritic cells to gain access to CD4+ T-cells in lymph nodes. Virus transmission to permissive T-cells occurs either in trans (without DCs infection, through viral capture and transmission), or in cis (following DCs productive infection, through the usual CD4-gp120 interaction), thereby inducing a robust infection. In trans infection, bound virions remain infectious over days and it is proposed that they are not degraded, but protected in non-lysosomal acidic organelles within the DCs close to the cell membrane thus contributing to the viral infectious potential during DCs' migration from the periphery to the lymphoid tissues. On arrival at lymphoid tissues, intact virions recycle back to DCs' cell surface allowing virus transmission to CD4+ T-cells. Functionally, acts as a class I viral fusion protein. Under the current model, the protein has at least 3 conformational states: pre-fusion native state, pre-hairpin intermediate state, and post-fusion hairpin state. During fusion of viral and target intracellular membranes, the coiled coil regions (heptad repeats) assume a trimer-of-hairpins structure, positioning the fusion peptide in close proximity to the C-terminal region of the ectodomain. The formation of this structure appears to drive apposition and subsequent fusion of viral and target cell membranes. Complete fusion occurs in host cell endosomes and is dynamin-dependent, however some lipid transfer might occur at the plasma membrane. The virus undergoes clathrin-dependent internalization long before endosomal fusion, thus minimizing the surface exposure of conserved viral epitopes during fusion and reducing the efficacy of inhibitors targeting these epitopes. Membranes fusion leads to delivery of the nucleocapsid into the cytoplasm. This is Envelope glycoprotein gp160 from Homo sapiens (Human).